Consider the following 173-residue polypeptide: Crossover junction endodeoxyribonuclease RuvC (173 aa).

Catalysis depends on residues Asp-8, Glu-67, and Asp-139. Asp-8, Glu-67, and Asp-139 together coordinate Mg(2+).

Belongs to the RuvC family. Homodimer which binds Holliday junction (HJ) DNA. The HJ becomes 2-fold symmetrical on binding to RuvC with unstacked arms; it has a different conformation from HJ DNA in complex with RuvA. In the full resolvosome a probable DNA-RuvA(4)-RuvB(12)-RuvC(2) complex forms which resolves the HJ. Mg(2+) is required as a cofactor.

It is found in the cytoplasm. The catalysed reaction is Endonucleolytic cleavage at a junction such as a reciprocal single-stranded crossover between two homologous DNA duplexes (Holliday junction).. In terms of biological role, the RuvA-RuvB-RuvC complex processes Holliday junction (HJ) DNA during genetic recombination and DNA repair. Endonuclease that resolves HJ intermediates. Cleaves cruciform DNA by making single-stranded nicks across the HJ at symmetrical positions within the homologous arms, yielding a 5'-phosphate and a 3'-hydroxyl group; requires a central core of homology in the junction. The consensus cleavage sequence is 5'-(A/T)TT(C/G)-3'. Cleavage occurs on the 3'-side of the TT dinucleotide at the point of strand exchange. HJ branch migration catalyzed by RuvA-RuvB allows RuvC to scan DNA until it finds its consensus sequence, where it cleaves and resolves the cruciform DNA. This Salmonella choleraesuis (strain SC-B67) protein is Crossover junction endodeoxyribonuclease RuvC.